A 43-amino-acid chain; its full sequence is MRDLKTYLSVAPVLSTLWFGSLAGLLIEINRLFPDGLTFPSSY.

The helical transmembrane segment at 7–27 (YLSVAPVLSTLWFGSLAGLLI) threads the bilayer.

The protein belongs to the PsaJ family.

It localises to the plastid. Its subcellular location is the chloroplast thylakoid membrane. Its function is as follows. May help in the organization of the PsaE and PsaF subunits. The polypeptide is Photosystem I reaction center subunit IX (Aethionema cordifolium (Lebanon stonecress)).